The sequence spans 361 residues: MSKQQPTQFINPETPGYVGFANLPNQVHRKSVKKGFEFTLMVVGESGLGKSTLINSLFLTDLYPERIIPGAAEKIERTVQIEASTVEIEERGVKLRLTVVDTPGYGDAINCRDCFKTIISYIDEQFERYLHDESGLNRRHIIDNRVHCCFYFISPFGHGLKPLDVAFMKAIHNKVNIVPVIAKADTLTLKERERLKKRILDEIEEHSIKIYHLPDAESDEDEDFKEQTRLLKASIPFSVVGSNQLIEAKGKKVRGRLYPWGVVEVENPEHNDFLKLRTMLITHMQDLQEVTQDLHYENFRSERLKRGGRKVENEDMNKDQILLEKEAELRRMQEMIARMQAQMQMQMQGGDSDSGALGQHV.

Tyr17 carries the phosphotyrosine modification. One can recognise a Septin-type G domain in the interval 34–306; that stretch reads KGFEFTLMVV…ENFRSERLKR (273 aa). Positions 44 to 51 are G1 motif; the sequence is GESGLGKS. Residues 44–52, Thr78, Gly104, and 183–186 each bind GTP; these read GESGLGKST and KADT. The G3 motif stretch occupies residues 101–104; sequence DTPG. Residues 182–185 form a G4 motif region; it reads AKAD. Position 190 is an N6-acetyllysine (Lys190). Tyr211 carries the phosphotyrosine modification. A Phosphoserine modification is found at Ser218. Positions 241, 256, and 258 each coordinate GTP. Residues 260 to 270 are important for dimerization; the sequence is WGVVEVENPEH.

This sequence belongs to the TRAFAC class TrmE-Era-EngA-EngB-Septin-like GTPase superfamily. Septin GTPase family. In terms of assembly, septins polymerize into heterooligomeric protein complexes that form filaments, and associate with cellular membranes, actin filaments and microtubules. GTPase activity is required for filament formation. Septin filaments are assembled from asymmetrical heterotrimers, composed of SEPTIN2, SEPTIN6 and SEPTIN7 that associate head-to-head to form a hexameric unit. Interaction between SEPTIN2 and SEPTIN7 seems indirect. Also interacts with SEPTIN9 and SEPTIN5. Interaction with SEPTIN4 not detected. Component of a septin core octameric complex consisting of SEPTIN12, SEPTIN7, SEPTIN6 and SEPTIN2 or SEPTIN4 in the order 12-7-6-2-2-6-7-12 or 12-7-6-4-4-6-7-12 and located in the sperm annulus. Interacts with MAP4. Interacts with DZIP1L. Widely expressed.

The protein resides in the cytoplasm. It localises to the cytoskeleton. It is found in the spindle. The protein localises to the chromosome. Its subcellular location is the centromere. The protein resides in the kinetochore. It localises to the cleavage furrow. It is found in the midbody. The protein localises to the cell cortex. Its subcellular location is the cell projection. The protein resides in the cilium membrane. It localises to the cilium. It is found in the flagellum. In terms of biological role, filament-forming cytoskeletal GTPase. Forms a filamentous structure with SEPTIN12, SEPTIN6, SEPTIN2 and probably SEPTIN4 at the sperm annulus which is required for the structural integrity and motility of the sperm tail during postmeiotic differentiation. Required for normal organization of the actin cytoskeleton. Plays a role in the biogenesis of polarized columnar-shaped epithelium by maintaining polyglutamylated microtubules, thus facilitating efficient vesicle transport, and by impeding MAP4 binding to tubulin. Required for the progression through mitosis. Forms a scaffold at the midplane of the mitotic splindle required to maintain CENPE localization at kinetochores and consequently chromosome congression. During anaphase, may be required for chromosome segregation and spindle elongation. Plays a role in ciliogenesis and collective cell movements. In cilia, required for the integrity of the diffusion barrier at the base of the primary cilium that prevents diffusion of transmembrane proteins between the cilia and plasma membranes: probably acts by regulating the assembly of the tectonic-like complex (also named B9 complex) by localizing TMEM231 protein. The sequence is that of Septin-2 from Mus musculus (Mouse).